We begin with the raw amino-acid sequence, 108 residues long: Parvalbumin beta (108 aa).

2 consecutive EF-hand domains span residues 38-73 and 77-108; these read KSTD…FSST and LTAA…LVKA. Ca(2+)-binding residues include Asp51, Asp53, Ser55, Phe57, Glu59, Glu62, Asp90, Asp92, Asp94, Lys96, and Glu101.

It belongs to the parvalbumin family.

Its function is as follows. In muscle, parvalbumin is thought to be involved in relaxation after contraction. It binds two calcium ions. This chain is Parvalbumin beta, found in Graptemys geographica (Common map turtle).